We begin with the raw amino-acid sequence, 885 residues long: DNA polymerase eta (885 aa).

The UmuC domain maps to 18 to 274 (VLLVDMDCFF…LPVGKIKGLG (257 aa)). Mg(2+) is bound by residues aspartate 22 and methionine 23. Mn(2+) is bound by residues aspartate 22 and methionine 23. Arginine 70 serves as a coordination point for a 2'-deoxyribonucleoside 5'-triphosphate. The Mg(2+) site is built by aspartate 125 and glutamate 126. Residues aspartate 125 and glutamate 126 each coordinate Mn(2+). Glutamate 126 is an active-site residue. Disordered stretches follow at residues 599 to 653 (AIEA…DLYV) and 658 to 677 (VPPT…RKFD). A compositionally biased stretch (acidic residues) spans 608 to 618 (FEEDTEEETEL). The span at 628 to 649 (EGQSSDAGQEQDPNTLNDSTGN) shows a compositional bias: polar residues. A UBZ3-type 1 zinc finger spans residues 701–737 (DILPTIKCDQCGANIPDEVKSLQTHRDHHFAQELSRT). 4 residues coordinate Zn(2+): cysteine 708, cysteine 711, histidine 725, and histidine 729. Positions 722-783 (LQTHRDHHFA…YSTAPPSNSI (62 aa)) are disordered. The span at 739–748 (RSTEREERTQ) shows a compositional bias: basic and acidic residues. Positions 766 to 780 (TAGSGSSSYSTAPPS) are enriched in low complexity. The UBZ3-type 2 zinc finger occupies 798–832 (SDPQMNQCPECKAFIKCVDMPEHLDYHVARNLQRE). The Zn(2+) site is built by cysteine 805, cysteine 808, histidine 820, and histidine 824. Residues 846–870 (NKEKISPVQPKKQSQKKLNSTISAS) form a disordered region.

This sequence belongs to the DNA polymerase type-Y family. As to quaternary structure, interacts (via C-terminus) with nopo. It depends on Mg(2+) as a cofactor. Mn(2+) serves as cofactor. Post-translationally, ubiquitination enhanced by nopo. In terms of tissue distribution, expressed in ovaries and testes.

It is found in the nucleus. It carries out the reaction DNA(n) + a 2'-deoxyribonucleoside 5'-triphosphate = DNA(n+1) + diphosphate. Its activity is regulated as follows. The enzyme in complex with the DNA substrate binds a third divalent metal cation. This binding is essential for catalyzing the DNA synthesis. Its function is as follows. DNA polymerase specifically involved in the DNA repair by translesion synthesis (TLS). Plays an important role in translesion synthesis, where the normal high-fidelity DNA polymerases cannot proceed and DNA synthesis stalls. Inserts one or 2 nucleotide(s) opposite the lesion. During homologous recombination (HR) repair, has a overlapping role with the error-prone translesion polymerase PolZ1/DNApol-zeta to initiate repair synthesis that is completed by end joining or another polymerase that can bind and reinitiate synthesis. Particularly important for the repair of UV-induced pyrimidine dimers and for hydroxyurea (HU)-induced DNA damage. Although inserts the correct base, may cause base transitions and transversions depending upon the context. Forms a Schiff base with 5'-deoxyribose phosphate at abasic sites, but does not have any lyase activity, preventing the release of the 5'-deoxyribose phosphate (5'-dRP) residue. This covalent trapping of the enzyme by the 5'-dRP residue inhibits its DNA synthetic activity during base excision repair, thereby avoiding high incidence of mutagenesis. In Drosophila melanogaster (Fruit fly), this protein is DNA polymerase eta.